The chain runs to 277 residues: MSSSNCVALVTGANKGIGFVIVRDLCRRFSGDVVLTARDEARGRAAVQQLQAEGLSPLFHQLDIDDRQSIRALRDFLRKEYGGLDVLVNNAGIAFKTADTTPFHIQAEVTMKTNFFGTRDVCTELLPLIKPQGRVVNVSSFVSVNSLKKCSRELQQKFRSETITEEELVGLMNKFVEDTKNGVHRKEGWPDTAYGVTKIGVTVLSRIHARKLSEQRGGDKILLNACCPGWVRTDMGGPKASKSPEEGAETPVYLALLPSDAEGPHGEFISEKRVVQW.

Position 2 is an N-acetylserine (S2). S2 and S30 each carry phosphoserine. NADP(+) contacts are provided by residues 10–34 (VTGANKGIGFVIVRDLCRRFSGDVV), 63–64 (DI), and N90. Glutathione-binding positions include 95–97 (FKT) and Q106. S140 lines the substrate pocket. Residue 193–194 (AY) coordinates glutathione. The active-site Proton acceptor is Y194. NADP(+) contacts are provided by residues 194–198 (YGVTK) and 231–233 (VRT). K239 is modified (N6-1-carboxyethyl lysine).

It belongs to the short-chain dehydrogenases/reductases (SDR) family. Monomer.

The protein resides in the cytoplasm. It catalyses the reaction a secondary alcohol + NADP(+) = a ketone + NADPH + H(+). It carries out the reaction prostaglandin F2alpha + NADP(+) = prostaglandin E2 + NADPH + H(+). The catalysed reaction is prostaglandin E1 + NADP(+) = 15-oxoprostaglandin E1 + NADPH + H(+). The enzyme catalyses menadione + NADPH + H(+) = menadiol + NADP(+). It catalyses the reaction prostaglandin D2 + NADP(+) = 15-oxoprostaglandin D2 + NADPH + H(+). It carries out the reaction prostaglandin E2 + NADP(+) = 15-oxoprostaglandin E2 + NADPH + H(+). The catalysed reaction is prostaglandin F2alpha + NADP(+) = 15-oxoprostaglandin F2alpha + NADPH + H(+). The enzyme catalyses daunorubicin + NADPH + H(+) = 13-dihydrodaunorubicin + NADP(+). It catalyses the reaction S-nitrosoglutathione + NADPH + H(+) = S-(hydroxysulfenamide)glutathione + NADP(+). It carries out the reaction a primary alcohol + NADP(+) = an aldehyde + NADPH + H(+). The catalysed reaction is cortisol + NADPH + H(+) = 20beta-dihydrocortisol + NADP(+). The enzyme catalyses corticosterone + NADPH + H(+) = 20beta-dihydrocorticosterone + NADP(+). NADPH-dependent reductase with broad substrate specificity. Catalyzes the reduction of a wide variety of carbonyl compounds including quinones, prostaglandins, menadione, plus various xenobiotics. Catalyzes the reduction of the antitumor anthracyclines doxorubicin and daunorubicin to the cardiotoxic compounds doxorubicinol and daunorubicinol. Can convert prostaglandin E to prostaglandin F2-alpha. Can bind glutathione, which explains its higher affinity for glutathione-conjugated substrates. Catalyzes the reduction of S-nitrosoglutathione. In addition, participates in the glucocorticoid metabolism by catalyzing the NADPH-dependent cortisol/corticosterone into 20beta-dihydrocortisol (20b-DHF) or 20beta-corticosterone (20b-DHB), which are weak agonists of NR3C1 and NR3C2 in adipose tissue. The chain is Carbonyl reductase [NADPH] 1 from Bos taurus (Bovine).